We begin with the raw amino-acid sequence, 584 residues long: Proline--tRNA ligase (584 aa).

The segment at 242–261 (APPASNPEERPATQVHDTPD) is disordered.

The protein belongs to the class-II aminoacyl-tRNA synthetase family. ProS type 1 subfamily. Homodimer.

It localises to the cytoplasm. It catalyses the reaction tRNA(Pro) + L-proline + ATP = L-prolyl-tRNA(Pro) + AMP + diphosphate. Functionally, catalyzes the attachment of proline to tRNA(Pro) in a two-step reaction: proline is first activated by ATP to form Pro-AMP and then transferred to the acceptor end of tRNA(Pro). As ProRS can inadvertently accommodate and process non-cognate amino acids such as alanine and cysteine, to avoid such errors it has two additional distinct editing activities against alanine. One activity is designated as 'pretransfer' editing and involves the tRNA(Pro)-independent hydrolysis of activated Ala-AMP. The other activity is designated 'posttransfer' editing and involves deacylation of mischarged Ala-tRNA(Pro). The misacylated Cys-tRNA(Pro) is not edited by ProRS. The protein is Proline--tRNA ligase of Salinispora arenicola (strain CNS-205).